The sequence spans 505 residues: Keratin, type II cuticular Hb1 (505 aa).

Residues 1-106 (MTCGSGFGGR…PNAQCVKQEE (106 aa)) are head. One can recognise an IF rod domain in the interval 106 to 417 (EKEQIKSLNS…RLLEGEEQRL (312 aa)). The segment at 107–141 (KEQIKSLNSRFAAFIDKVRFLEQQNKLLETKLQFY) is coil 1A. Residues 142–151 (QNRECCQSNL) are linker 1. Positions 152 to 252 (EPLFEGYIET…YEEEILILQS (101 aa)) are coil 1B. Residue Lys-212 forms a Glycyl lysine isopeptide (Lys-Gly) (interchain with G-Cter in SUMO1) linkage. Residues 253-269 (HISDTSVVVKLDNSRDL) are linker 12. Residues 270–413 (NMDCIIAEIK…ATYRRLLEGE (144 aa)) form a coil 2 region. The tract at residues 414–505 (EQRLCEGIGA…GSCGSSCRKC (92 aa)) is tail.

This sequence belongs to the intermediate filament family. Heterotetramer of two type I and two type II keratins. As to expression, abundantly expressed in the differentiating cortex of growing (anagen) hair. Expression is restricted to the keratinocytes of the hair cortex and is absent from inner root sheath and medulla. Expressed in malignant lymph node tissue in breast carcinoma tissue.

This Homo sapiens (Human) protein is Keratin, type II cuticular Hb1 (KRT81).